Here is a 201-residue protein sequence, read N- to C-terminus: Protein Thf1 (201 aa).

A coiled-coil region spans residues 174–201 (IYKSSISKMEQAKELIQEQRIKDKKKTL).

It belongs to the THF1 family.

Its function is as follows. May be involved in photosynthetic membrane biogenesis. The sequence is that of Protein Thf1 from Prochlorococcus marinus (strain MIT 9312).